Here is a 584-residue protein sequence, read N- to C-terminus: Protein FAM117B (584 aa).

The tract at residues Met1–Thr214 is disordered. Ser10 is modified (phosphoserine). A compositionally biased stretch (gly residues) spans Thr53–Gly79. Over residues Pro80–Thr90 the composition is skewed to low complexity. A Phosphoserine modification is found at Ser102. The segment covering Thr114–Ser132 has biased composition (low complexity). A compositionally biased stretch (pro residues) spans Pro133–Leu142. A compositionally biased stretch (polar residues) spans Thr145–Thr154. Residues Ser204 to Thr214 show a composition bias toward low complexity. Residues Ser206, Ser215, Ser216, and Ser268 each carry the phosphoserine modification. Disordered regions lie at residues Gly227–Phe461 and Ser551–Gly584. Basic residues predominate over residues Arg287 to Asp297. At Ser340 the chain carries Phosphoserine. Over residues Ile350–Gln361 the composition is skewed to basic and acidic residues. Positions Gln379 to Pro392 are enriched in polar residues. Ser386 carries the post-translational modification Phosphoserine. The span at Ser399 to Ser412 shows a compositional bias: low complexity. Phosphoserine is present on residues Ser444 and Ser452.

This is Protein FAM117B (Fam117b) from Mus musculus (Mouse).